Consider the following 567-residue polypeptide: MATIDKHSYAHMFGPTIGDRVRLGDTDLWLEVEKDFTEYGEEVKFGGGKVIRDGMGQSQASCFDTPDLVITNVVILDHWGIIKADIGIKDGRIAIIGKAGNPDVQDNIDIEIGPGTEIIAGEGQIVTAGGIDAHIHFICPQQIDEALMSGVTTMIGGGTGPATGSNATTCTPGPWNTHKMLQATNDFPMNFGFLGKGNTSLPIALEEQIEAGVCGLKLHEDWGTTPASIDNCLSVAERYDVQIAIHTDTLNESGFVEDTLGAFKGRTIHTYHTEGAGGGHSPDIIRACGESNVLPSSTNPTRPYTINTIDEHLDMLMVCHHLDPAIPEDIAFADSRIRKESIAAEDIMHDLGAISMIASDSQAMGRVGEMITRTWQTAHKMKQQRGPLAPDTERNDNFRLKRYVAKYTINPAISHGISHEVGSIEIGKLADLVLWKPAFFGIKPAMIIKSGFIAAAPMGDANASIPTPQPVYYRPMFGAHGQAPANTSMTFMSQASLDAGVPDKIGLTRMVSACKNTRNIGKDDMIHNSWQPTIEVDAQTYEVRANGELLTCEPVTTLPLAQLYCLF.

The region spanning Gly129–Phe567 is the Urease domain. Residues His134, His136, and Lys217 each contribute to the Ni(2+) site. At Lys217 the chain carries N6-carboxylysine. His219 serves as a coordination point for substrate. Ni(2+) contacts are provided by His246 and His272. His320 functions as the Proton donor in the catalytic mechanism. Ni(2+) is bound at residue Asp360.

This sequence belongs to the metallo-dependent hydrolases superfamily. Urease alpha subunit family. Heterotrimer of UreA (gamma), UreB (beta) and UreC (alpha) subunits. Three heterotrimers associate to form the active enzyme. It depends on Ni cation as a cofactor. Carboxylation allows a single lysine to coordinate two nickel ions.

Its subcellular location is the cytoplasm. The enzyme catalyses urea + 2 H2O + H(+) = hydrogencarbonate + 2 NH4(+). The protein operates within nitrogen metabolism; urea degradation; CO(2) and NH(3) from urea (urease route): step 1/1. This Alteromonas mediterranea (strain DSM 17117 / CIP 110805 / LMG 28347 / Deep ecotype) protein is Urease subunit alpha.